Consider the following 65-residue polypeptide: Cecropin (65 aa).

Positions 1-23 are cleaved as a signal peptide; it reads MNFVKVLFFISACILIMLSAVSG.

It belongs to the cecropin family.

The protein localises to the secreted. Its function is as follows. Has antibacterial activity. This is Cecropin (LOC113514368) from Galleria mellonella (Greater wax moth).